Consider the following 557-residue polypeptide: Dihydroxy-acid dehydratase (557 aa).

Asp78 contacts Mg(2+). Cys119 contributes to the [2Fe-2S] cluster binding site. Asp120 and Lys121 together coordinate Mg(2+). Lys121 is modified (N6-carboxylysine). Cys191 is a binding site for [2Fe-2S] cluster. Mg(2+) is bound at residue Glu442. Ser468 functions as the Proton acceptor in the catalytic mechanism.

This sequence belongs to the IlvD/Edd family. As to quaternary structure, homodimer. The cofactor is [2Fe-2S] cluster. Requires Mg(2+) as cofactor.

The catalysed reaction is (2R)-2,3-dihydroxy-3-methylbutanoate = 3-methyl-2-oxobutanoate + H2O. It catalyses the reaction (2R,3R)-2,3-dihydroxy-3-methylpentanoate = (S)-3-methyl-2-oxopentanoate + H2O. The protein operates within amino-acid biosynthesis; L-isoleucine biosynthesis; L-isoleucine from 2-oxobutanoate: step 3/4. It participates in amino-acid biosynthesis; L-valine biosynthesis; L-valine from pyruvate: step 3/4. Its function is as follows. Functions in the biosynthesis of branched-chain amino acids. Catalyzes the dehydration of (2R,3R)-2,3-dihydroxy-3-methylpentanoate (2,3-dihydroxy-3-methylvalerate) into 2-oxo-3-methylpentanoate (2-oxo-3-methylvalerate) and of (2R)-2,3-dihydroxy-3-methylbutanoate (2,3-dihydroxyisovalerate) into 2-oxo-3-methylbutanoate (2-oxoisovalerate), the penultimate precursor to L-isoleucine and L-valine, respectively. The sequence is that of Dihydroxy-acid dehydratase from Syntrophobacter fumaroxidans (strain DSM 10017 / MPOB).